Consider the following 174-residue polypeptide: Co-chaperone protein HscB homolog (174 aa).

The region spanning 2 to 74 (NYFELFKFPP…IRRAEHMLSL (73 aa)) is the J domain.

The protein belongs to the HscB family. As to quaternary structure, interacts with HscA and stimulates its ATPase activity.

Functionally, co-chaperone involved in the maturation of iron-sulfur cluster-containing proteins. Seems to help targeting proteins to be folded toward HscA. This Shewanella oneidensis (strain ATCC 700550 / JCM 31522 / CIP 106686 / LMG 19005 / NCIMB 14063 / MR-1) protein is Co-chaperone protein HscB homolog.